The following is a 967-amino-acid chain: Transmembrane channel-like protein 5 (967 aa).

4 stretches are compositionally biased toward polar residues: residues 1–10, 21–31, 53–62, and 168–184; these read MSSFHQNSSY, GSRNHTHNYLE, NPHSSGSRTN, and QDNS…SNLP. Residues 1–240 are disordered; the sequence is MSSFHQNSSY…EEGDGYSSSK (240 aa). Over 1–420 the chain is Extracellular; sequence MSSFHQNSSY…YFSFLRWLLK (420 aa). Residues 421 to 441 traverse the membrane as a helical segment; that stretch reads FNIFSFVMNFSFIIIPQFTVG. The Cytoplasmic segment spans residues 442–449; sequence AKNTLQFT. The chain crosses the membrane as a helical span at residues 450–470; the sequence is GLEFFTGAGYFGDTVMYYGFY. The Extracellular segment spans residues 471–487; sequence TNSTIRHRMGGASYNMQ. A helical transmembrane segment spans residues 488–508; sequence LAYIFTIGACLVVCFFSLLFS. Topologically, residues 509 to 581 are cytoplasmic; it reads MAKYFRNNFI…NQQLTRFSAH (73 aa). The helical transmembrane segment at 582–602 threads the bilayer; it reads VAAWLVSTGVTAACCVAVYYL. Residues 603-616 lie on the Extracellular side of the membrane; the sequence is AEYNSEFLKTHRNP. A helical transmembrane segment spans residues 617–637; it reads GAVLLLPFVVSCINLAVPRFY. The Cytoplasmic portion of the chain corresponds to 638–660; sequence SMFRLVERYEIPRQEVYVLLVRN. A helical transmembrane segment spans residues 661 to 681; it reads IFLKISIVGILCYYWLNIVAL. The Extracellular portion of the chain corresponds to 682–694; it reads SGEECWETLIGQD. The helical transmembrane segment at 695-715 threads the bilayer; sequence IYRLLLMDFVFSLADSLLGEF. At 716–749 the chain is on the cytoplasmic side; sequence LRRLIGMKFTSLSLQEFDIARNVLELIYAQTLTW. The chain crosses the membrane as a helical span at residues 750 to 770; it reads LGIFFCPLLPFIQMITLFIMF. The Extracellular segment spans residues 771–796; it reads YVKNVSLMMNFQPPSKAWRASQMITF. A helical membrane pass occupies residues 797 to 817; that stretch reads FIFLLFFPSFTGVLCTLAITI. At 818–861 the chain is on the cytoplasmic side; sequence WRLKPSADCGPFRGLPSFIQSIYSWIDTLSRRPGYLWVVWIYQN. The chain crosses the membrane as a helical span at residues 862–882; the sequence is LIGSVHFFFILTLIVLIITYL. Topologically, residues 883 to 967 are extracellular; the sequence is YWQITEGRKV…RSAQEENPIA (85 aa).

This sequence belongs to the TMC family. Ubiquitously expressed.

The protein localises to the membrane. Probable component of an ion channel. Molecular function hasn't been characterized yet. This Mus musculus (Mouse) protein is Transmembrane channel-like protein 5.